The chain runs to 113 residues: Hydrogenase maturation factor HypA (113 aa).

Histidine 2 is a binding site for Ni(2+). The Zn(2+) site is built by cysteine 73, cysteine 76, cysteine 89, and cysteine 92.

Belongs to the HypA/HybF family.

Functionally, involved in the maturation of [NiFe] hydrogenases. Required for nickel insertion into the metal center of the hydrogenase. This chain is Hydrogenase maturation factor HypA, found in Rhizobium leguminosarum bv. viciae.